The chain runs to 400 residues: Cytohesin-2 (400 aa).

Residues 10–67 (DLTPEERMELENIRRRKQELLVEIQRLREELSEAMSEVEGLEANEGSKTLQRNRKMAM) adopt a coiled-coil conformation. In terms of domain architecture, SEC7 spans 72–201 (FNMDPKKGIQ…VIMLNTSLHN (130 aa)). The PH domain occupies 259–376 (NPDREGWLLK…WIKSIQAAVS (118 aa)). A 1,2-diacyl-sn-glycero-3-phospho-(1D-myo-inositol-3,4,5-trisphosphate) contacts are provided by residues 268 to 276 (KLGGGRVKT), Arg280, Tyr291, Arg301, Lys339, Asn350, and His351. The segment at 387-395 (RKKRISVKK) is C-terminal autoinhibitory region.

In terms of assembly, heteromer. Composed of TAMALIN, CYTH2 and at least one GRM1. Interacts with ARRB1. Interacts with ARL4D; the interaction is direct. Directly interacts with CCDC120 through the coiled coil domain; this interaction stabilizes CCDC120, possibly by preventing its ubiquitination, and is required for neurite growth in a neuroblastoma cell line. Interacts with FRMD4A. Interacts (via N-terminal domain) with INAVA (via N-terminal domain). As to expression, present in all tissues tested, with highest protein levels in brain and adrenal.

It is found in the cell membrane. Its subcellular location is the cytoplasm. The protein localises to the cell projection. The protein resides in the growth cone. It localises to the cell junction. It is found in the tight junction. Its subcellular location is the adherens junction. Functionally, acts as a guanine-nucleotide exchange factor (GEF). Promotes guanine-nucleotide exchange on ARF1, ARF3 and ARF6. Activates ARF factors through replacement of GDP with GTP. The cell membrane form, in association with ARL4 proteins, recruits ARF6 to the plasma membrane. Involved in neurite growth. The protein is Cytohesin-2 (Cyth2) of Mus musculus (Mouse).